A 29-amino-acid chain; its full sequence is Cyclotide mech-3 (29 aa).

Residues 1-29 constitute a cross-link (cyclopeptide (Gly-Asn)); it reads GLPTCGETCTLGKCNTPKCTCNWPICYKN. 3 cysteine pairs are disulfide-bonded: Cys-5-Cys-19, Cys-9-Cys-21, and Cys-14-Cys-26.

This is a cyclic peptide. In terms of processing, contains 3 disulfide bonds.

Functionally, probably participates in a plant defense mechanism (Potential). Binds to and induces leakage in phospholipd membranes, particularly ones containing 1-palmitoyl-2-oleophosphatidylethanolamine (POPE). In vitro, displays cytotoxicity against cultured cells but no hemolytic activity towards fresh erythrocytes. The polypeptide is Cyclotide mech-3 (Melicytus chathamicus (Chatham Island mahoe)).